Reading from the N-terminus, the 95-residue chain is Large ribosomal subunit protein uL23 (95 aa).

The protein belongs to the universal ribosomal protein uL23 family. In terms of assembly, part of the 50S ribosomal subunit. Contacts protein L29, and trigger factor when it is bound to the ribosome.

One of the early assembly proteins it binds 23S rRNA. One of the proteins that surrounds the polypeptide exit tunnel on the outside of the ribosome. Forms the main docking site for trigger factor binding to the ribosome. The polypeptide is Large ribosomal subunit protein uL23 (Desulfatibacillum aliphaticivorans).